The sequence spans 604 residues: Zinc finger protein chinmo (604 aa).

Residues 32–98 form the BTB domain; it reads ADVILSCDGV…MYKGEVHVSQ (67 aa). Disordered stretches follow at residues 122-155, 291-310, 330-437, and 450-470; these read RLAA…SGGS, CDSL…GYTH, RSPY…DEST, and NLKY…TPNT. The span at 364 to 374 shows a compositional bias: low complexity; that stretch reads PSSSASSTAPT. The segment covering 384–409 has biased composition (polar residues); sequence ASPQSSRYENHSPSTTAGNGNATSSL. The span at 425–437 shows a compositional bias: acidic residues; it reads ANDDDRELMDEST. The span at 461-470 shows a compositional bias: low complexity; it reads SNTSSTTPNT. 2 consecutive C2H2-type zinc fingers follow at residues 517-540 and 545-568; these read LKCL…RQRH and VPCP…AREH.

As to expression, broadly expressed in the developing larval central nervous system (at protein level). Expressed in the larval lymph gland and circulating hemocytes (at protein level). Expressed in all cell types of the adult testis stem cell niche but not detected in somatic cells of the adult ovary (at protein level). In the testis, expressed at high levels in cyst stem cells and early cyst cells and, at lower levels, in germline stem cells (at protein level).

The protein localises to the nucleus. Functionally, required for morphological differentiation of postmitotic neurons during postembryonic brain development. Ensures production of appropriate neuron subtypes within a lineage by preventing precocious generation of late neuronal types of that lineage. Acts as a downstream mediator of the transcriptional activator Stat92e and is required for the development of the eye-antennal disk which gives rise to the adult eye, antenna and head capsule, for transcriptional repression of the Notch receptor ligand Ser and for the self-renewal of cyst stem cells in the testis. In the adult testis, maintains the male identify of adult somatic cyst stem cells. Represses expression and alternative splicing of transformer pre-mRNA, resulting in the production of the male-specific isoform of transcription factor dsx which ensures male-specific transcription of target genes. Plays a role in actin nuclear localization through its involvement in repressing the expression of the kinase Cdi. This maintains the cofilin/actin-depolymerizing factor homolog tsr in its unphosphorylated state which is required for actin nuclear import. This chain is Zinc finger protein chinmo, found in Drosophila melanogaster (Fruit fly).